The primary structure comprises 683 residues: Elongation factor G 1 (683 aa).

The tr-type G domain occupies 3–278; that stretch reads DKMRNIGIMA…AVVDFLPAPN (276 aa). GTP is bound by residues 12-19, 76-80, and 130-133; these read AHIDAGKT, DTPGH, and NKMD.

Belongs to the TRAFAC class translation factor GTPase superfamily. Classic translation factor GTPase family. EF-G/EF-2 subfamily.

Its subcellular location is the cytoplasm. Functionally, catalyzes the GTP-dependent ribosomal translocation step during translation elongation. During this step, the ribosome changes from the pre-translocational (PRE) to the post-translocational (POST) state as the newly formed A-site-bound peptidyl-tRNA and P-site-bound deacylated tRNA move to the P and E sites, respectively. Catalyzes the coordinated movement of the two tRNA molecules, the mRNA and conformational changes in the ribosome. The polypeptide is Elongation factor G 1 (Treponema denticola (strain ATCC 35405 / DSM 14222 / CIP 103919 / JCM 8153 / KCTC 15104)).